The sequence spans 271 residues: Cell division protein FtsQ (271 aa).

The interval 1-37 (MAAGPTTAEKSGASGAKRSSKGSSDGPSRPGTRNRKF) is disordered. The Cytoplasmic segment spans residues 1-43 (MAAGPTTAEKSGASGAKRSSKGSSDGPSRPGTRNRKFRMPGTR). The segment covering 8–24 (AEKSGASGAKRSSKGSS) has biased composition (low complexity). Residues 44-64 (ALLITLGVLLLVAGGLWALYG) traverse the membrane as a helical segment. Over 65 to 271 (STWFRVERVK…APTAPASSGS (207 aa)) the chain is Extracellular. One can recognise a POTRA domain in the interval 68–137 (FRVERVKTSG…HGIGLKVTER (70 aa)).

Belongs to the FtsQ/DivIB family. FtsQ subfamily.

Its subcellular location is the cell membrane. Its function is as follows. Essential cell division protein. The protein is Cell division protein FtsQ of Streptomyces venezuelae (strain ATCC 10712 / CBS 650.69 / DSM 40230 / JCM 4526 / NBRC 13096 / PD 04745).